The primary structure comprises 128 residues: Keratin-associated protein 2-3 (128 aa).

Residues Cys-5–Pro-112 form a 10 X 5 AA repeats of C-C-[CDPQRWG]-[APRS]-[CIPSTVD] region.

The protein belongs to the KRTAP type 2 family. As to quaternary structure, interacts with hair keratins.

In the hair cortex, hair keratin intermediate filaments are embedded in an interfilamentous matrix, consisting of hair keratin-associated proteins (KRTAP), which are essential for the formation of a rigid and resistant hair shaft through their extensive disulfide bond cross-linking with abundant cysteine residues of hair keratins. The matrix proteins include the high-sulfur and high-glycine-tyrosine keratins. The chain is Keratin-associated protein 2-3 (KRTAP2-3) from Homo sapiens (Human).